Consider the following 393-residue polypeptide: Lipoyl synthase, mitochondrial (393 aa).

[4Fe-4S] cluster is bound by residues C111, C116, C122, C142, C146, C149, and S357. In terms of domain architecture, Radical SAM core spans 127-346; sequence EHGTQTATIM…ETRGNELGFL (220 aa).

This sequence belongs to the radical SAM superfamily. Lipoyl synthase family. It depends on [4Fe-4S] cluster as a cofactor.

It is found in the mitochondrion. The enzyme catalyses [[Fe-S] cluster scaffold protein carrying a second [4Fe-4S](2+) cluster] + N(6)-octanoyl-L-lysyl-[protein] + 2 oxidized [2Fe-2S]-[ferredoxin] + 2 S-adenosyl-L-methionine + 4 H(+) = [[Fe-S] cluster scaffold protein] + N(6)-[(R)-dihydrolipoyl]-L-lysyl-[protein] + 4 Fe(3+) + 2 hydrogen sulfide + 2 5'-deoxyadenosine + 2 L-methionine + 2 reduced [2Fe-2S]-[ferredoxin]. Its pathway is protein modification; protein lipoylation via endogenous pathway; protein N(6)-(lipoyl)lysine from octanoyl-[acyl-carrier-protein]: step 2/2. Catalyzes the radical-mediated insertion of two sulfur atoms into the C-6 and C-8 positions of the octanoyl moiety bound to the lipoyl domains of lipoate-dependent enzymes, thereby converting the octanoylated domains into lipoylated derivatives. In Aedes aegypti (Yellowfever mosquito), this protein is Lipoyl synthase, mitochondrial.